The sequence spans 332 residues: Biotin synthase (332 aa).

One can recognise a Radical SAM core domain in the interval 46 to 275; it reads SDIQRASLLS…RARVRLSAGR (230 aa). [4Fe-4S] cluster-binding residues include C61, C65, and C68. The [2Fe-2S] cluster site is built by C106, C138, C198, and R270.

Belongs to the radical SAM superfamily. Biotin synthase family. As to quaternary structure, homodimer. Requires [4Fe-4S] cluster as cofactor. It depends on [2Fe-2S] cluster as a cofactor.

The enzyme catalyses (4R,5S)-dethiobiotin + (sulfur carrier)-SH + 2 reduced [2Fe-2S]-[ferredoxin] + 2 S-adenosyl-L-methionine = (sulfur carrier)-H + biotin + 2 5'-deoxyadenosine + 2 L-methionine + 2 oxidized [2Fe-2S]-[ferredoxin]. It functions in the pathway cofactor biosynthesis; biotin biosynthesis; biotin from 7,8-diaminononanoate: step 2/2. In terms of biological role, catalyzes the conversion of dethiobiotin (DTB) to biotin by the insertion of a sulfur atom into dethiobiotin via a radical-based mechanism. This is Biotin synthase from Methylobacterium sp. (strain 4-46).